The chain runs to 438 residues: GDP-mannose 6-dehydrogenase (438 aa).

Tyr10, Val11, Asp30, Lys35, Thr86, and Thr124 together coordinate NAD(+). 10 residues coordinate GDP-alpha-D-mannuronate: Glu161, Lys210, Asn214, His217, Asn225, Tyr256, Tyr257, Arg259, Phe262, and Gly265. Cys268 is an active-site residue. Lys271 is an NAD(+) binding site. Lys324 serves as a coordination point for GDP-alpha-D-mannuronate. Arg331 contributes to the NAD(+) binding site.

This sequence belongs to the UDP-glucose/GDP-mannose dehydrogenase family.

The enzyme catalyses GDP-alpha-D-mannose + 2 NAD(+) + H2O = GDP-alpha-D-mannuronate + 2 NADH + 3 H(+). The protein operates within glycan biosynthesis; alginate biosynthesis. Catalyzes the oxidation of guanosine diphospho-D-mannose (GDP-D-mannose) to GDP-D-mannuronic acid, a precursor for alginate polymerization. The alginate layer causes a mucoid phenotype and provides a protective barrier against host immune defenses and antibiotics. This Pseudomonas syringae pv. tomato (strain ATCC BAA-871 / DC3000) protein is GDP-mannose 6-dehydrogenase (algD).